The chain runs to 2839 residues: PDZ domain-containing protein 2 (2839 aa).

A PDZ 1 domain is found at 85–182; the sequence is LSFGNIPVFG…LIMLRRFKHK (98 aa). Residues 185–318 are disordered; sequence STYNGNSSNS…RFSKGGKTDF (134 aa). Positions 189-202 are enriched in low complexity; that stretch reads GNSSNSSEPGETPT. Residues 280 to 296 are compositionally biased toward basic and acidic residues; the sequence is HLERSEVDRGTEHRIPK. In terms of domain architecture, PDZ 2 spans 334 to 419; that stretch reads KMELLKESDG…MVQLVVASKE (86 aa). The segment covering 437–447 has biased composition (polar residues); the sequence is TSSVEDVSSWT. The disordered stretch occupies residues 437–501; sequence TSSVEDVSSW…PKQGSNKIKL (65 aa). Residues 448–461 show a composition bias toward acidic residues; it reads DNEDQEADGEEDEG. Position 568 is a phosphoserine (Ser568). Residues 586–672 enclose the PDZ 3 domain; that stretch reads IIGLYKEKGK…GLFVLTVRTK (87 aa). The segment covering 678–697 has biased composition (polar residues); that stretch reads LTPCSTPTHMSRSASPNFNT. The segment at 678 to 723 is disordered; the sequence is LTPCSTPTHMSRSASPNFNTSGGASAGGSDEGSSSSLGRKTPGPKD. The region spanning 728–813 is the PDZ 4 domain; it reads EVTLNKEPRV…GPVRLVIGRH (86 aa). Composition is skewed to polar residues over residues 832-843 and 894-908; these read YQESKEANSSPG and GCST…PSTS. Disordered stretches follow at residues 832–852 and 879–921; these read YQES…KSPS and DFMV…ANSL. Ser944 and Ser948 each carry phosphoserine. Disordered regions lie at residues 984-1033, 1062-1155, 1216-1493, 1530-1620, 1638-1712, 1809-1865, 1892-1976, 2009-2079, 2135-2166, 2178-2211, 2232-2251, 2353-2383, 2426-2481, and 2516-2564; these read SLPG…ISAP, SAEA…PCDL, KAAS…GAPA, FHED…LPTQ, PRES…SPLS, NQGT…DLSK, GKAK…SVSD, PDRG…GNIM, QVAE…SMAK, IRKA…GEDH, HFGR…DSQV, AKSG…GSLG, SRQN…SRSK, and ITPR…GEAA. Residues 1012–1022 are compositionally biased toward basic and acidic residues; sequence MDVHNQEERPR. 7 stretches are compositionally biased toward polar residues: residues 1092-1111, 1138-1147, 1221-1236, 1250-1269, 1305-1315, 1384-1401, and 1440-1453; these read RTDT…QQKS, SGSQTVNLTG, LGQQ…SDLI, SKTS…SQPA, TRSASETSTPH, SVSS…PSTD, and RSPS…GSQE. Low complexity predominate over residues 1662–1672; that stretch reads SSQPSSLLEMS. The segment covering 1698-1711 has biased composition (polar residues); that stretch reads EVTSASSAMENSPL. Residue Ser1850 is modified to Phosphoserine. The segment covering 1919–1931 has biased composition (polar residues); it reads SPQTSHKTLSKAV. Residues 1936-1945 show a composition bias toward basic and acidic residues; sequence HVADHEDPDR. The segment covering 2139–2152 has biased composition (low complexity); that stretch reads SSTSHPSSLPSHAS. The segment covering 2370–2383 has biased composition (low complexity); the sequence is GRRSSGSIVSGSLG. 3 stretches are compositionally biased toward polar residues: residues 2426 to 2437, 2470 to 2480, and 2546 to 2559; these read SRQNPPETSSKG, RHTQPSPVSRS, and PKTS…SASD. The PDZ 5 domain occupies 2622–2706; sequence FIVLNRKEGS…HKDALVVIKK (85 aa). Residues 2709 to 2729 are disordered; the sequence is DQPRPSARQEPPTANGKGLLS. The PDZ 6 domain maps to 2750–2835; that stretch reads CVEVLKTSAG…GPVQLLIRKH (86 aa).

In terms of assembly, interacts with SCN10A, CTNND2 and PKP4. Post-translationally, a secreted form is produced by caspase-mediated proteolytic cleavage. In terms of tissue distribution, isoform 2 is expressed (at protein level) in prostate and many prostate tumors.

It is found in the nucleus. The protein resides in the cytoplasm. The protein localises to the endoplasmic reticulum. Its subcellular location is the secreted. In Homo sapiens (Human), this protein is PDZ domain-containing protein 2 (PDZD2).